The chain runs to 288 residues: tRNA dimethylallyltransferase (288 aa).

2 to 9 contributes to the ATP binding site; the sequence is GPTAAGKS. Residue 4 to 9 participates in substrate binding; sequence TAAGKS. The tract at residues 27 to 30 is interaction with substrate tRNA; the sequence is DSMQ.

It belongs to the IPP transferase family. Monomer. Mg(2+) serves as cofactor.

It catalyses the reaction adenosine(37) in tRNA + dimethylallyl diphosphate = N(6)-dimethylallyladenosine(37) in tRNA + diphosphate. Its function is as follows. Catalyzes the transfer of a dimethylallyl group onto the adenine at position 37 in tRNAs that read codons beginning with uridine, leading to the formation of N6-(dimethylallyl)adenosine (i(6)A). The chain is tRNA dimethylallyltransferase from Frankia alni (strain DSM 45986 / CECT 9034 / ACN14a).